The sequence spans 177 residues: Inorganic pyrophosphatase (177 aa).

Substrate is bound by residues Lys30, Arg44, and Tyr56. Residues Asp66, Asp71, and Asp103 each contribute to the Mg(2+) site. Substrate is bound at residue Tyr142.

The protein belongs to the PPase family. Homohexamer. Mg(2+) serves as cofactor.

It localises to the cytoplasm. It carries out the reaction diphosphate + H2O = 2 phosphate + H(+). Functionally, catalyzes the hydrolysis of inorganic pyrophosphate (PPi) forming two phosphate ions. The polypeptide is Inorganic pyrophosphatase (Caulobacter vibrioides (strain ATCC 19089 / CIP 103742 / CB 15) (Caulobacter crescentus)).